We begin with the raw amino-acid sequence, 323 residues long: Phospho-N-acetylmuramoyl-pentapeptide-transferase (323 aa).

9 helical membrane-spanning segments follow: residues 12-32, 58-78, 84-104, 120-140, 151-171, 177-197, 200-220, 229-250, and 303-323; these read IVMA…IIIP, PTIG…VMVG, AMIA…DDLL, MILL…YIGT, INLG…VTNA, GLDG…GIIS, LGHI…LAFL, VFMG…ALIL, and KIVS…FASL.

It belongs to the glycosyltransferase 4 family. MraY subfamily. The cofactor is Mg(2+).

Its subcellular location is the cell membrane. The catalysed reaction is UDP-N-acetyl-alpha-D-muramoyl-L-alanyl-gamma-D-glutamyl-meso-2,6-diaminopimeloyl-D-alanyl-D-alanine + di-trans,octa-cis-undecaprenyl phosphate = di-trans,octa-cis-undecaprenyl diphospho-N-acetyl-alpha-D-muramoyl-L-alanyl-D-glutamyl-meso-2,6-diaminopimeloyl-D-alanyl-D-alanine + UMP. Its pathway is cell wall biogenesis; peptidoglycan biosynthesis. Functionally, catalyzes the initial step of the lipid cycle reactions in the biosynthesis of the cell wall peptidoglycan: transfers peptidoglycan precursor phospho-MurNAc-pentapeptide from UDP-MurNAc-pentapeptide onto the lipid carrier undecaprenyl phosphate, yielding undecaprenyl-pyrophosphoryl-MurNAc-pentapeptide, known as lipid I. This is Phospho-N-acetylmuramoyl-pentapeptide-transferase from Clostridium perfringens (strain SM101 / Type A).